Consider the following 199-residue polypeptide: Dephospho-CoA kinase (199 aa).

A DPCK domain is found at Val-4–Ser-199. Ala-12–Thr-17 is an ATP binding site.

It belongs to the CoaE family.

Its subcellular location is the cytoplasm. The catalysed reaction is 3'-dephospho-CoA + ATP = ADP + CoA + H(+). Its pathway is cofactor biosynthesis; coenzyme A biosynthesis; CoA from (R)-pantothenate: step 5/5. Catalyzes the phosphorylation of the 3'-hydroxyl group of dephosphocoenzyme A to form coenzyme A. The protein is Dephospho-CoA kinase of Oceanobacillus iheyensis (strain DSM 14371 / CIP 107618 / JCM 11309 / KCTC 3954 / HTE831).